Here is a 506-residue protein sequence, read N- to C-terminus: Hippocampus abundant transcript-like protein 1 (506 aa).

Residues 1–25 (MSVEPPPELEEKAASEPEAGAMPEK) form a disordered region. At 1 to 49 (MSVEPPPELEEKAASEPEAGAMPEKRAGAQAAGSTWLQGFGRPSVYHAA) the chain is on the extracellular side. The chain crosses the membrane as a helical span at residues 50–70 (IVIFLEFFAWGLLTTPMLTVL). Topologically, residues 71–82 (HETFSQHTFLMN) are cytoplasmic. Residues 83-103 (GLIQGVKGLLSFLSAPLIGAL) traverse the membrane as a helical segment. At 104 to 111 (SDVWGRKP) the chain is on the extracellular side. A helical transmembrane segment spans residues 112–132 (FLLGTVFFTCFPIPLMRISPW). Residues 133–134 (WY) lie on the Cytoplasmic side of the membrane. The helical transmembrane segment at 135 to 155 (FAMISVSGVFSVTFSVIFAYV) threads the bilayer. At 156–168 (ADVTQEHERSTAY) the chain is on the extracellular side. The helical transmembrane segment at 169–189 (GWVSATFAASLVSSPAIGAYL) threads the bilayer. Residues 190-196 (SASYGDS) are Cytoplasmic-facing. The helical transmembrane segment at 197-217 (LVVLVATVVALLDICFILVAV) threads the bilayer. Residues 218-255 (PESLPEKMRPVSWGAQISWKQADPFASLKKVGKDSTVL) lie on the Extracellular side of the membrane. The helical transmembrane segment at 256-276 (LICITVFLSYLPEAGQYSSFF) threads the bilayer. Residues 277 to 281 (LYLRQ) are Cytoplasmic-facing. Residues 282–302 (VIGFGSVKIAAFIAMVGILSI) form a helical membrane-spanning segment. Residues 303–319 (VAQTAFLSILMRSLGNK) are Extracellular-facing. The chain crosses the membrane as a helical span at residues 320-340 (NTVLLGLGFQMLQLAWYGFGS). Gln-341 is a topological domain (cytoplasmic). Residues 342–362 (AWMMWAAGTVAAMSSITFPAI) form a helical membrane-spanning segment. Over 363–387 (SALVSRNAESDQQGVAQGIITGIRG) the chain is Extracellular. A helical transmembrane segment spans residues 388–408 (LCNGLGPALYGFIFYMFHVEL). At 409 to 428 (TELGPKLNSNNVPLQGAVIP) the chain is on the cytoplasmic side. A helical membrane pass occupies residues 429–449 (GPPFLFGACIVLMSFLVALFI). Residues 450–506 (PEYSKASGVQKHSNSSSGSLTNTPERGSDEDIEPLLQDSSIWELSSFEEPGNQCTEL) are Extracellular-facing. The disordered stretch occupies residues 457–481 (GVQKHSNSSSGSLTNTPERGSDEDI). Residues 459-474 (QKHSNSSSGSLTNTPE) show a composition bias toward polar residues. The N-linked (GlcNAc...) asparagine glycan is linked to Asn-463.

Belongs to the major facilitator superfamily.

The protein localises to the membrane. In Homo sapiens (Human), this protein is Hippocampus abundant transcript-like protein 1.